A 507-amino-acid polypeptide reads, in one-letter code: Beta-glucosidase 3 (507 aa).

An N-terminal signal peptide occupies residues 1–23; it reads MELTLSLLTIFLLFFALSGRCSD. Q41 provides a ligand contact to a beta-D-glucoside. N64 carries an N-linked (GlcNAc...) asparagine glycan. A beta-D-glucoside-binding positions include H138 and 183-184; that span reads NE. Catalysis depends on E184, which acts as the Proton donor. A disulfide bridge links C203 with C210. N-linked (GlcNAc...) asparagine glycosylation is found at N209 and N214. Residue Y326 participates in a beta-D-glucoside binding. An N-linked (GlcNAc...) asparagine glycan is attached at N361. E394 is an a beta-D-glucoside binding site. E394 (nucleophile) is an active-site residue. N-linked (GlcNAc...) asparagine glycosylation occurs at N429. Residues W439 and F455 each coordinate a beta-D-glucoside. N-linked (GlcNAc...) asparagine glycosylation is found at N461, N485, and N500.

Belongs to the glycosyl hydrolase 1 family.

It catalyses the reaction Hydrolysis of terminal, non-reducing beta-D-glucosyl residues with release of beta-D-glucose.. The polypeptide is Beta-glucosidase 3 (Arabidopsis thaliana (Mouse-ear cress)).